The sequence spans 378 residues: Erythronate-4-phosphate dehydrogenase (378 aa).

Substrate-binding residues include Ser-45 and Thr-66. Asp-146 and Thr-175 together coordinate NAD(+). Arg-208 is a catalytic residue. Asp-232 serves as a coordination point for NAD(+). Glu-237 is a catalytic residue. The active-site Proton donor is the His-254. An NAD(+)-binding site is contributed by Gly-257. Tyr-258 is a binding site for substrate.

This sequence belongs to the D-isomer specific 2-hydroxyacid dehydrogenase family. PdxB subfamily. As to quaternary structure, homodimer.

The protein localises to the cytoplasm. The enzyme catalyses 4-phospho-D-erythronate + NAD(+) = (R)-3-hydroxy-2-oxo-4-phosphooxybutanoate + NADH + H(+). It participates in cofactor biosynthesis; pyridoxine 5'-phosphate biosynthesis; pyridoxine 5'-phosphate from D-erythrose 4-phosphate: step 2/5. In terms of biological role, catalyzes the oxidation of erythronate-4-phosphate to 3-hydroxy-2-oxo-4-phosphonooxybutanoate. This Escherichia coli (strain ATCC 8739 / DSM 1576 / NBRC 3972 / NCIMB 8545 / WDCM 00012 / Crooks) protein is Erythronate-4-phosphate dehydrogenase.